The sequence spans 129 residues: Small ribosomal subunit protein uS11 (129 aa).

The protein belongs to the universal ribosomal protein uS11 family. Part of the 30S ribosomal subunit. Interacts with proteins S7 and S18. Binds to IF-3.

Its function is as follows. Located on the platform of the 30S subunit, it bridges several disparate RNA helices of the 16S rRNA. Forms part of the Shine-Dalgarno cleft in the 70S ribosome. The chain is Small ribosomal subunit protein uS11 from Pseudomonas putida (strain GB-1).